Here is a 297-residue protein sequence, read N- to C-terminus: Alpha/beta-gliadin A-IV (297 aa).

Residues 1–20 (MKTFLILALRAIVATTATIA) form the signal peptide. Residues 29 to 55 (QPQNPSQQQPQKQVPLVQQQQFPGQQQ) show a composition bias toward low complexity. Disordered regions lie at residues 29 to 127 (QPQN…QQQQ) and 234 to 257 (QYPS…SVQP). Over residues 56–67 (PFPPQQPYPQQQ) the composition is skewed to pro residues. Low complexity predominate over residues 68–80 (PFPSQQPYMQLQP). Residues 81-101 (FPQPQLPYPQPQLPYPQPQPF) show a composition bias toward pro residues. 2 stretches are compositionally biased toward low complexity: residues 102–127 (RPQQ…QQQQ) and 234–250 (QYPS…QNPQ).

It belongs to the gliadin/glutenin family. Substrate of transglutaminase.

Its function is as follows. Gliadin is the major seed storage protein in wheat. The chain is Alpha/beta-gliadin A-IV from Triticum aestivum (Wheat).